The chain runs to 793 residues: Methionine--tRNA ligase (793 aa).

The 'HIGH' region signature appears at 11 to 21 (PYVNNFPHLGN). The Zn(2+) site is built by cysteine 142, cysteine 145, cysteine 155, and cysteine 158. A 'KMSKS' region motif is present at residues 334-338 (KFSKS). Lysine 337 lines the ATP pocket. Basic and acidic residues predominate over residues 581–590 (SQKDRKKSEK). Residues 581–610 (SQKDRKKSEKGCSACKDSGSSKSDAAASSA) form a disordered region. A compositionally biased stretch (low complexity) spans 591–610 (GCSACKDSGSSKSDAAASSA). A tRNA-binding domain is found at 622–727 (FSKKIALKTA…PWAAPGTPVI (106 aa)).

It belongs to the class-I aminoacyl-tRNA synthetase family. MetG type 1 subfamily. Homodimer. The cofactor is Zn(2+).

The protein resides in the cytoplasm. The catalysed reaction is tRNA(Met) + L-methionine + ATP = L-methionyl-tRNA(Met) + AMP + diphosphate. In terms of biological role, is required not only for elongation of protein synthesis but also for the initiation of all mRNA translation through initiator tRNA(fMet) aminoacylation. This chain is Methionine--tRNA ligase, found in Treponema denticola (strain ATCC 35405 / DSM 14222 / CIP 103919 / JCM 8153 / KCTC 15104).